The sequence spans 173 residues: MTETANLFFLGAAGGVEWGTVIVQVLTFIVLLALLKKFAWGPLKDVMDKRERDINRDIDDAEQAKLNAQKLEEENKQKLKETQEEVQKILEDAKVQARQQQEQIIHEANVRANGMIETAQSEINSQKERAIADINNQVSELSVLIASKVLRKEISEQDQKALVDKYLKEAGDK.

A helical membrane pass occupies residues 15–35 (GVEWGTVIVQVLTFIVLLALL).

This sequence belongs to the ATPase B chain family. In terms of assembly, F-type ATPases have 2 components, F(1) - the catalytic core - and F(0) - the membrane proton channel. F(1) has five subunits: alpha(3), beta(3), gamma(1), delta(1), epsilon(1). F(0) has three main subunits: a(1), b(2) and c(10-14). The alpha and beta chains form an alternating ring which encloses part of the gamma chain. F(1) is attached to F(0) by a central stalk formed by the gamma and epsilon chains, while a peripheral stalk is formed by the delta and b chains.

The protein localises to the cell membrane. F(1)F(0) ATP synthase produces ATP from ADP in the presence of a proton or sodium gradient. F-type ATPases consist of two structural domains, F(1) containing the extramembraneous catalytic core and F(0) containing the membrane proton channel, linked together by a central stalk and a peripheral stalk. During catalysis, ATP synthesis in the catalytic domain of F(1) is coupled via a rotary mechanism of the central stalk subunits to proton translocation. Its function is as follows. Component of the F(0) channel, it forms part of the peripheral stalk, linking F(1) to F(0). This chain is ATP synthase subunit b, found in Staphylococcus aureus (strain MRSA252).